The sequence spans 456 residues: Phospholipase A1 member A (456 aa).

The signal sequence occupies residues Met-1–Ser-24. The Nucleophile role is filled by Ser-166. The active-site Charge relay system is the Asp-190. Cys-245 and Cys-258 are disulfide-bonded. Catalysis depends on His-260, which acts as the Charge relay system. Cystine bridges form between Cys-282/Cys-293 and Cys-296/Cys-304. N-linked (GlcNAc...) asparagine glycosylation occurs at Asn-365.

This sequence belongs to the AB hydrolase superfamily. Lipase family.

Its subcellular location is the secreted. The catalysed reaction is a 1,2-diacyl-sn-glycero-3-phospho-L-serine + H2O = a 2-acyl-sn-glycero-3-phospho-L-serine + a fatty acid + H(+). It catalyses the reaction 1,2-di-(9Z)-octadecenoyl-sn-glycero-3-phospho-L-serine + H2O = 2-(9Z-octadecenoyl)-sn-glycero-3-phospho-L-serine + (9Z)-octadecenoate + H(+). The enzyme catalyses 1-hexadecanoyl-2-(5Z,8Z,11Z,14Z-eicosatetraenoyl)-sn-glycero-3-phospho-L-serine + H2O = 2-(5Z,8Z,11Z,14Z)-eicosatetraenoyl-sn-glycero-3-phospho-L-serine + hexadecanoate + H(+). It carries out the reaction a 1-acyl-sn-glycero-3-phospho-L-serine + H2O = sn-glycero-3-phospho-L-serine + a fatty acid + H(+). The catalysed reaction is 1-(9Z-octadecenoyl)-sn-glycero-3-phospho-L-serine + H2O = sn-glycero-3-phospho-L-serine + (9Z)-octadecenoate + H(+). Its function is as follows. Hydrolyzes the ester bond of the acyl group attached at the sn-1 position of phosphatidylserines (phospholipase A1 activity) and 1-acyl-2-lysophosphatidylserines (lysophospholipase activity) in the pathway of phosphatidylserines acyl chain remodeling. Cleaves phosphatidylserines exposed on the outer leaflet of the plasma membrane of apoptotic cells producing 2-acyl-1-lysophosphatidylserines, which in turn enhance mast cell activation and histamine production. Has no activity toward other glycerophospholipids including phosphatidylcholines, phosphatidylethanolamines, phosphatidic acids or phosphatidylinositols, or glycerolipids such as triolein. This is Phospholipase A1 member A from Rattus norvegicus (Rat).